A 279-amino-acid chain; its full sequence is Acetyl-coenzyme A carboxylase carboxyl transferase subunit beta (279 aa).

Residues 23 to 279 (LWWKCEECGA…LTTLLSLMKL (257 aa)) form the CoA carboxyltransferase N-terminal domain. Zn(2+) is bound by residues Cys-27, Cys-30, Cys-46, and Cys-49. Residues 27 to 49 (CEECGAALHKKQMEASDHTCPQC) form a C4-type zinc finger.

This sequence belongs to the AccD/PCCB family. Acetyl-CoA carboxylase is a heterohexamer composed of biotin carboxyl carrier protein (AccB), biotin carboxylase (AccC) and two subunits each of ACCase subunit alpha (AccA) and ACCase subunit beta (AccD). Zn(2+) is required as a cofactor.

The protein resides in the cytoplasm. The catalysed reaction is N(6)-carboxybiotinyl-L-lysyl-[protein] + acetyl-CoA = N(6)-biotinyl-L-lysyl-[protein] + malonyl-CoA. Its pathway is lipid metabolism; malonyl-CoA biosynthesis; malonyl-CoA from acetyl-CoA: step 1/1. Component of the acetyl coenzyme A carboxylase (ACC) complex. Biotin carboxylase (BC) catalyzes the carboxylation of biotin on its carrier protein (BCCP) and then the CO(2) group is transferred by the transcarboxylase to acetyl-CoA to form malonyl-CoA. This is Acetyl-coenzyme A carboxylase carboxyl transferase subunit beta from Chlorobium chlorochromatii (strain CaD3).